A 287-amino-acid polypeptide reads, in one-letter code: Nucleotide-binding protein Gbem_0872 (287 aa).

Residue 8 to 15 (GLSGSGKS) coordinates ATP. Residue 59 to 62 (DIRS) participates in GTP binding.

It belongs to the RapZ-like family.

Displays ATPase and GTPase activities. This chain is Nucleotide-binding protein Gbem_0872, found in Citrifermentans bemidjiense (strain ATCC BAA-1014 / DSM 16622 / JCM 12645 / Bem) (Geobacter bemidjiensis).